The primary structure comprises 173 residues: Alpha-crystallin A chain (173 aa).

Met-1 carries the N-acetylmethionine modification. Positions Met-1–Glu-63 are required for complex formation with BFSP1 and BFSP2. The residue at position 6 (Gln-6) is a Deamidated glutamine; partial. At Ser-45 the chain carries Phosphoserine. Gln-50 is modified (deamidated glutamine; partial). In terms of domain architecture, sHSP spans Leu-52–Ser-162. Lys-70 bears the N6-acetyllysine mark. Position 90 is a deamidated glutamine; partial (Gln-90). The residue at position 99 (Lys-99) is an N6-acetyllysine. His-100 is a Zn(2+) binding site. At Asn-101 the chain carries Deamidated asparagine; partial. The Zn(2+) site is built by Glu-102 and His-107. Position 122 is a phosphoserine (Ser-122). Asn-123 carries the deamidated asparagine; partial modification. The segment at Lys-145 to Ser-173 is disordered. Gln-147 is subject to Deamidated glutamine; partial. The segment covering Gly-153 to Pro-167 has biased composition (basic and acidic residues). Position 154 (His-154) interacts with Zn(2+). O-linked (GlcNAc) serine glycosylation occurs at Ser-162.

Belongs to the small heat shock protein (HSP20) family. In terms of assembly, heteromer composed of three CRYAA and one CRYAB subunits. Inter-subunit bridging via zinc ions enhances stability, which is crucial as there is no protein turn over in the lens. Can also form homodimers and homotetramers (dimers of dimers) which serve as the building blocks of homooligomers. Within homooligomers, the zinc-binding motif is created from residues of 3 different molecules. His-100 and Glu-102 from one molecule are ligands of the zinc ion, and His-107 and His-154 residues from additional molecules complete the site with tetrahedral coordination geometry. Part of a complex required for lens intermediate filament formation composed of BFSP1, BFSP2 and CRYAA. Acetylation at Lys-70 may increase chaperone activity. In terms of processing, undergoes age-dependent proteolytical cleavage at the C-terminus.

Its subcellular location is the cytoplasm. The protein localises to the nucleus. Functionally, contributes to the transparency and refractive index of the lens. Acts as a chaperone, preventing aggregation of various proteins under a wide range of stress conditions. Required for the correct formation of lens intermediate filaments as part of a complex composed of BFSP1, BFSP2 and CRYAA. The protein is Alpha-crystallin A chain (CRYAA) of Cavia porcellus (Guinea pig).